The primary structure comprises 339 residues: Peroxidase 29 (339 aa).

Residues 1 to 28 (MKPKSKVAESTAASCFLVMSLLCSCIIG) form the signal peptide. Cystine bridges form between C47/C127, C80/C85, C133/C335, and C213/C242. The active-site Proton acceptor is H78. 5 residues coordinate Ca(2+): D79, V82, G84, D86, and S88. P176 is a binding site for substrate. H206 is a binding site for heme b. T207 provides a ligand contact to Ca(2+). The N-linked (GlcNAc...) asparagine glycan is linked to N224. Ca(2+) is bound by residues D260, T262, and D267.

It belongs to the peroxidase family. Classical plant (class III) peroxidase subfamily. It depends on heme b as a cofactor. Requires Ca(2+) as cofactor.

Its subcellular location is the secreted. It catalyses the reaction 2 a phenolic donor + H2O2 = 2 a phenolic radical donor + 2 H2O. Its function is as follows. Removal of H(2)O(2), oxidation of toxic reductants, biosynthesis and degradation of lignin, suberization, auxin catabolism, response to environmental stresses such as wounding, pathogen attack and oxidative stress. These functions might be dependent on each isozyme/isoform in each plant tissue. This is Peroxidase 29 (PER29) from Arabidopsis thaliana (Mouse-ear cress).